The following is an 84-amino-acid chain: UPF0473 protein CLI_2624 (84 aa).

This sequence belongs to the UPF0473 family.

This is UPF0473 protein CLI_2624 from Clostridium botulinum (strain Langeland / NCTC 10281 / Type F).